Consider the following 2241-residue polypeptide: MKVTQASCHQGDIARFGARAGNQCVCNGIMFLHALHLGGTSAVLQTEALDAIMEEGARLDARLERELQKKLPAGGRLPVYRLGDEVPRRLESRFGRTVHALSRPFNGTTETCDLDGYMCPGIFDFLRYAHAKPRPTYVLVTVNSLARAVVFTEDHMLVFDPHSSAECHNAAVYHCEGLHQVLMVLTGFGVQLSPAFYYEALFLYMLDVATVPEAEIAARLVSTYRDRDIDLTGVVRESADTAATTTTAAPSLPPLPDPIVDPGCPPGVAPSIPVYDPSSSPKKTPEKRRKDLSGSKHGGKKKPPSTTSKTLATASSSPSAIAAASSSSAVPPSYSCGEGALPALGRYQQLVDEVEQELKALTLPPLPANTSAWTLHAAGTESGANAATATAPSFDEAFLTDRLQQLIIHAVNQRSCLRRPCGPQSAAQQAVRAYLGLSKKLDAFLLNWLHHGLDLQRMHDYLSHKTTKGTYSTLDRALLEKMQVVFDPYGRQHGPALIAWVEEMLRYVESKPTNELSQRLQRFVTKRPMPVSDSFVCLRPVDFQRLTQVIEQRRRVLQRQREEYHGVYEHLAGLITSIDIHDLDASDLNRREILKALQPLDDNAKQELFRLGNAKMLELQMDLDRLSTQLLTRVHNHILNGFLPVEDLKQMERVVEQVLRLFYDLRDLKLCDGSYEEGFVVIREQLSYLMTGTVRDNVPLLQEILQLRHAYQQATQQNEGRLTQIHDLLHVIETLVRDPGSRGSALTLALVQEQLAQLEALGGLQLPEVQQRLQNAQLALSRLYEEEEETQRFLDGLSYDDPPTEQTIKRHPQLREMLRRDEQTRLRLINAVLSMFHTLVMRLARDESPRPTFFDAVSLLLQQLPPDSHEREDLRAANATYAQMVKKLEQIEKAGTGASEKRFQALRELVYFFRNHEYFFQHMVGRLGVGPQVTELYERYQHEMEEQHLERLEREWQEEAGKLTVTSVEDVQRVLARAPSHRVMHQMQQTLTTKMQDFLDKEKRKQEEQQRQLLDGYQKKVQQDLQRVVDAVKGEMLSTIPHQPLEATLELLLGLDQRAQPLLDKFNQDLLSALQQLSKKLDGRINECLHGVLTGDVERRCHPHREAAMQTQASLNHLDQILGPQLLIHETQQALQHAVHQAQFIEKCQQGDPTTAITGSEFESDFARYRSSQQKMEGQLQETRQQMTETSERLDRSLRQDPGSSSVTRVPEKPFKGQELAGRITPPPADFQRPVFKTLLDQQADAARKALSDEADLLNQKVQTQLRQRDEQLSTAQNLWTDLVTRHKMSGGLDVTTPDAKALMEKPLETLRELLGKATQQLPYLSAERTVRWMLAFLEEALAQITADPTHPHHGSRTHYRNLQQQAVESAVTLAHQIEQNAACENFIAQHQEATANGASTPRVDMVQAVEAVWQRLEPGRVAGGAARHQKVQELLQRLGQTLGDLELQETLATEYFALLHGIQTFSYGLDFRSQLEKIRDLRTRFAELAKRCGTRLSNEGALPNPRKPQATTSLGAFTRGLNALERHVQLGHQYLLNKLNGSSLVYRLEDIPSVLPPTHETDPALIMRDRLRRLCFARHHDTFLEVVDVFGMRQIVTQAGEPIYLVTDYGNVAFKYLALRDDGRPLAWRRRCSGGGLKNVVTTRYKAITVAVAVCQTLRTFWPQISQYDLRPYLTQHQSHTHPAETHTLHNLKLFCYLVSTAWHQRIDTQQELTAADRVGSGEGGDVGEQRPGRGTVLRLSLQEFCVLIAALYPEYIYTVLKYPVQMSLPSLTAHLHQDVIHAVVNNTHKMPPDHLPEQVKAFCITPTQWPAMQLNKLFWENKLVQQLCQVGPQKSTPSLGKLWLYAMATLVFPQDMLQCLWLELKPQYAETYASVSELVQTLFQIFTQQCEMVTEGYTQPQLPTGEPVLQMIRVRRQDTTTTDTNTTTEPGLLDVFIQTETALDYALGSWLFGIPVCLGVHVADLLKGQRVLVARHLEYTSRDRDFLRIQRSRDLNLSQLLQDTWTETPLEHCWLQAQIRRLRDYLRFPTRLEFIPLVIYNAQDHTVVRVLRPPSTFEQDHSRLVLDEAFPTFPLYDQDDNTSADNVAASGAAPTPPVPFNRVPVNIQFLRENPPPIARVQQPPRRHRHRAAAAADDDGQIDHAQDDTSRTADSALVSTAFGGSVFQENRLGETPLCRDELVAVAPGAASTSFASPPITVLTQNVLSALEILRLVRLDLRQLAQSVQDTIQHMRFLYLL.

Residues 1-238 (MKVTQASCHQ…IDLTGVVRES (238 aa)) form a deubiquitination activity region. Residues 4–226 (TQASCHQGDI…AARLVSTYRD (223 aa)) enclose the Peptidase C76 domain. Catalysis depends on residues Cys24, Asp160, and His162. Positions 239–314 (ADTAATTTTA…STTSKTLATA (76 aa)) are disordered. Positions 240–250 (DTAATTTTAAP) are enriched in low complexity. Over residues 251-268 (SLPPLPDPIVDPGCPPGV) the composition is skewed to pro residues. The span at 304–314 (PSTTSKTLATA) shows a compositional bias: low complexity. An interaction with inner tegument protein region spans residues 327-331 (SSAVP). Disordered regions lie at residues 1187–1230 (MTET…PPAD) and 2118–2152 (PIAR…DTSR). 2 stretches are compositionally biased toward basic and acidic residues: residues 1190 to 1199 (TSERLDRSLR) and 2142 to 2152 (QIDHAQDDTSR).

It belongs to the herpesviridae large tegument protein family. Interacts with host CUL1 and CUL4A; these interactions inhibit the E3 ligase activity of cullins. Interacts with inner tegument protein. Interacts with capsid vertex specific component CVC2. Interacts with the major capsid protein/MCP.

Its subcellular location is the virion tegument. It localises to the host cytoplasm. The protein localises to the host nucleus. The enzyme catalyses Thiol-dependent hydrolysis of ester, thioester, amide, peptide and isopeptide bonds formed by the C-terminal Gly of ubiquitin (a 76-residue protein attached to proteins as an intracellular targeting signal).. Its function is as follows. Large tegument protein that plays multiple roles in the viral cycle. During viral entry, remains associated with the capsid while most of the tegument is detached and participates in the capsid transport toward the host nucleus. Plays a role in the routing of the capsid at the nuclear pore complex and subsequent uncoating. Within the host nucleus, acts as a deneddylase and promotes the degradation of nuclear CRLs (cullin-RING ubiquitin ligases) and thereby stabilizes nuclear CRL substrates, while cytoplasmic CRLs remain unaffected. These modifications prevent host cell cycle S-phase progression and create a favorable environment allowing efficient viral genome replication. Participates later in the secondary envelopment of capsids. Indeed, plays a linker role for the association of the outer viral tegument to the capsids together with the inner tegument protein. The polypeptide is Large tegument protein deneddylase (UL48) (Homo sapiens (Human)).